The chain runs to 755 residues: Histone-lysine N-methyltransferase, H3 lysine-9 specific SUVH8 (755 aa).

2 disordered regions span residues 62-98 (YDRD…PPQT) and 111-243 (YDRD…KMVI). Composition is skewed to basic and acidic residues over residues 73 to 86 (VHRE…EEAH) and 122 to 135 (IDRE…EDAH). Residues 174-186 (KRGRGRPKGSKNG) constitute a DNA-binding region (a.T hook). Positions 174 to 193 (KRGRGRPKGSKNGSRKPKKP) are enriched in basic residues. Polar residues predominate over residues 197 to 207 (DNNSTDASAGP). The segment covering 212–231 (GKRRCGRPKGLKNRSRKPKK) has biased composition (basic residues). Residues 310-448 (GPIPGVQVGD…FKEYRFKLLR (139 aa)) form the YDG domain. Residues 528 to 578 (QSLVQSYIHQNCTCILKNCGQLPYHDNILVCRKPLIYECGGSCPTRMVETG) enclose the Pre-SET domain. The 143-residue stretch at 581 to 723 (LHLEVFKTSN…PMTELTYDYG (143 aa)) folds into the SET domain. S-adenosyl-L-methionine contacts are provided by residues 591-593 (CGW), Asp624, Tyr626, Arg676, and 679-680 (NH). Positions 682, 743, 745, and 750 each coordinate Zn(2+). In terms of domain architecture, Post-SET spans 739–755 (GKKICLCGSVKCRGSFG).

It belongs to the class V-like SAM-binding methyltransferase superfamily. Histone-lysine methyltransferase family. Suvar3-9 subfamily.

The protein resides in the nucleus. Its subcellular location is the chromosome. It localises to the centromere. The catalysed reaction is N(6)-methyl-L-lysyl(9)-[histone H3] + S-adenosyl-L-methionine = N(6),N(6)-dimethyl-L-lysyl(9)-[histone H3] + S-adenosyl-L-homocysteine + H(+). The enzyme catalyses L-lysyl(9)-[histone H3] + S-adenosyl-L-methionine = N(6)-methyl-L-lysyl(9)-[histone H3] + S-adenosyl-L-homocysteine + H(+). In terms of biological role, histone methyltransferase. Methylates 'Lys-9' of histone H3. H3 'Lys-9' methylation represents a specific tag for epigenetic transcriptional repression. The sequence is that of Histone-lysine N-methyltransferase, H3 lysine-9 specific SUVH8 (SUVH8) from Arabidopsis thaliana (Mouse-ear cress).